The chain runs to 637 residues: tRNA uridine 5-carboxymethylaminomethyl modification enzyme MnmG (637 aa).

18–23 is a binding site for FAD; the sequence is GAGHAG. 282-296 provides a ligand contact to NAD(+); the sequence is GPRYCPSIEDKIVRF.

Belongs to the MnmG family. As to quaternary structure, homodimer. Heterotetramer of two MnmE and two MnmG subunits. It depends on FAD as a cofactor.

It localises to the cytoplasm. Functionally, NAD-binding protein involved in the addition of a carboxymethylaminomethyl (cmnm) group at the wobble position (U34) of certain tRNAs, forming tRNA-cmnm(5)s(2)U34. In Pediococcus pentosaceus (strain ATCC 25745 / CCUG 21536 / LMG 10740 / 183-1w), this protein is tRNA uridine 5-carboxymethylaminomethyl modification enzyme MnmG.